A 1858-amino-acid polypeptide reads, in one-letter code: Protein ROS1C (1858 aa).

Residues 347-356 (TEALKGEDAP) show a composition bias toward basic and acidic residues. Disordered stretches follow at residues 347 to 416 (TEAL…AEPF) and 1288 to 1309 (PDTA…KNSE). Composition is skewed to basic residues over residues 360–370 (LKTRRRKHRPK) and 394–404 (KPKRKYVRKNR). 4 residues coordinate [4Fe-4S] cluster: C1492, C1499, C1502, and C1508.

It belongs to the DNA glycosylase family. DEMETER subfamily. [4Fe-4S] cluster is required as a cofactor. Expressed in pistils and immature seeds. Expressed a low levels in roots, leaves and anthers.

It localises to the nucleus. Its function is as follows. Bifunctional DNA glycosylase/lyase, which excises 5-methylcytosine (5-meC) and 5-hydroxymethylcytosine (5-hmeC), leaving an apyrimidinic (AP) site that is subsequently incised by the lyase activity. Is responsible for the demethylation of methylated cytosine residues of Tos17 retrotransposon DNA. Demethylation of Tos17 cytosine residues promotes its transposition. May be involved in seed development. In Oryza sativa subsp. japonica (Rice), this protein is Protein ROS1C.